Consider the following 964-residue polypeptide: Protein translocase subunit SecA (964 aa).

Residues Gln86, 104-108, and Asp494 contribute to the ATP site; that span reads GEGKT. The segment at 848–964 is disordered; sequence AESADTIAVA…YKMCHGQNEK (117 aa). Positions 871 to 882 are enriched in acidic residues; the sequence is AEGEVEEEDEDT. Over residues 889–900 the composition is skewed to low complexity; the sequence is AESAAASGAGES. 4 residues coordinate Zn(2+): Cys947, Cys949, Cys958, and His959.

Belongs to the SecA family. Monomer and homodimer. Part of the essential Sec protein translocation apparatus which comprises SecA, SecYEG and auxiliary proteins SecDF. Other proteins may also be involved. Zn(2+) serves as cofactor.

The protein localises to the cell membrane. It is found in the cytoplasm. The catalysed reaction is ATP + H2O + cellular proteinSide 1 = ADP + phosphate + cellular proteinSide 2.. In terms of biological role, part of the Sec protein translocase complex. Interacts with the SecYEG preprotein conducting channel. Has a central role in coupling the hydrolysis of ATP to the transfer of proteins into and across the cell membrane, serving as an ATP-driven molecular motor driving the stepwise translocation of polypeptide chains across the membrane. This Bifidobacterium longum (strain NCC 2705) protein is Protein translocase subunit SecA.